The primary structure comprises 340 residues: MLHTIGILIWIIIKILVIVVPLLISVAYLTYAERKVIGYIQVRIGPNRVGLKGLLQPFADLLKLITKEIIVPTRSNKYLFVIAPLFALVPSLVGWAVIPFQEGVVLANINAGVLYLFAMSSLGVYGVLIAGWASNSKYAMFGALRSTAQTVSYEIAMGFALVGVLLAAGSMNLTDIVNSQKGGMLHWWFIPLLPLFLVFWIAGIAETNRAPFDLAEGESEIVAGFHVEYSGIGFALFFLSEYASMILISTFMAILFMGGWLSPFEGITFLDQIFFVVPGFVWLLLKISFFLFVYLWVRATFPRYRYDQLMRLGWKVLIPVTIVWLIVTSLMVVAHVKPWF.

Helical transmembrane passes span 4–24 (TIGI…PLLI), 78–98 (YLFV…WAVI), 113–133 (VLYL…AGWA), 151–171 (VSYE…AGSM), 184–204 (MLHW…IAGI), 244–264 (SMIL…LSPF), 273–293 (IFFV…FLFV), and 316–336 (VLIP…VAHV).

The protein belongs to the complex I subunit 1 family. NDH-1 is composed of 14 different subunits. Subunits NuoA, H, J, K, L, M, N constitute the membrane sector of the complex.

It localises to the cell inner membrane. The catalysed reaction is a quinone + NADH + 5 H(+)(in) = a quinol + NAD(+) + 4 H(+)(out). Its function is as follows. NDH-1 shuttles electrons from NADH, via FMN and iron-sulfur (Fe-S) centers, to quinones in the respiratory chain. The immediate electron acceptor for the enzyme in this species is believed to be ubiquinone. Couples the redox reaction to proton translocation (for every two electrons transferred, four hydrogen ions are translocated across the cytoplasmic membrane), and thus conserves the redox energy in a proton gradient. This subunit may bind ubiquinone. This chain is NADH-quinone oxidoreductase subunit H, found in Legionella pneumophila (strain Corby).